The following is a 266-amino-acid chain: Protein-ADP-ribose hydrolase (266 aa).

The Macro domain occupies 74 to 265 (TDLKDLKPIK…LYKEAFNRDA (192 aa)). 3 residues coordinate ADP-D-ribose: Asp93, Ile94, and Asn107. Residues Cys113, His118, and Cys120 each contribute to the Zn(2+) site. Residues Cys120, Ile121, Asp122, Ser212, Thr213, Gly214, and Phe216 each coordinate ADP-D-ribose.

The protein belongs to the MacroD-type family. Zn-Macro subfamily. Zn(2+) serves as cofactor.

It catalyses the reaction 4-O-(ADP-D-ribosyl)-L-aspartyl-[protein] + H2O = L-aspartyl-[protein] + ADP-D-ribose + H(+). Functionally, ADP-ribosylhydrolase that specifically reverses the SirTM-mediated mono-ADP-ribosylation at an asparatate residue of GcvH-L, by releasing ADP-ribose from the target protein. May play a role in the regulation of the response to host-induced oxidative stress. In Staphylococcus aureus (strain MSSA476), this protein is Protein-ADP-ribose hydrolase.